The sequence spans 275 residues: Fructose-2,6-bisphosphatase TIGAR (275 aa).

The active-site Tele-phosphohistidine intermediate is the histidine 11. Residue glutamate 89 is the Proton donor/acceptor of the active site.

It belongs to the phosphoglycerate mutase family.

Its subcellular location is the cytoplasm. It is found in the nucleus. The protein localises to the mitochondrion. It carries out the reaction beta-D-fructose 2,6-bisphosphate + H2O = beta-D-fructose 6-phosphate + phosphate. Functionally, fructose-bisphosphatase hydrolyzing fructose-2,6-bisphosphate as well as fructose-1,6-bisphosphate. Acts as a negative regulator of glycolysis by lowering intracellular levels of fructose-2,6-bisphosphate in a p53/TP53-dependent manner, resulting in the pentose phosphate pathway (PPP) activation and NADPH production. Contributes to the generation of reduced glutathione to cause a decrease in intracellular reactive oxygen species (ROS) content, correlating with its ability to protect cells from oxidative or metabolic stress-induced cell death. May play a role in mitophagy inhibition. The sequence is that of Fructose-2,6-bisphosphatase TIGAR from Xenopus tropicalis (Western clawed frog).